We begin with the raw amino-acid sequence, 149 residues long: Flagellar assembly factor FliW (149 aa).

The protein belongs to the FliW family. In terms of assembly, interacts with translational regulator CsrA and flagellin(s).

It localises to the cytoplasm. Functionally, acts as an anti-CsrA protein, binds CsrA and prevents it from repressing translation of its target genes, one of which is flagellin. Binds to flagellin and participates in the assembly of the flagellum. This is Flagellar assembly factor FliW from Thermotoga sp. (strain RQ2).